A 67-amino-acid polypeptide reads, in one-letter code: MPQLDTSTWFITIISSMITLFILFQLKVSSQTFPLAPSPKSLTTMKVKTPWELKWTKIYLPHSLPQQ.

Residues 8–24 (TWFITIISSMITLFILF) traverse the membrane as a helical segment. Position 54 is an N6-acetyllysine; alternate (Lys54). The residue at position 54 (Lys54) is an N6-succinyllysine; alternate. Lys57 carries the N6-acetyllysine modification.

This sequence belongs to the ATPase protein 8 family. Component of the ATP synthase complex composed at least of ATP5F1A/subunit alpha, ATP5F1B/subunit beta, ATP5MC1/subunit c (homooctomer), MT-ATP6/subunit a, MT-ATP8/subunit 8, ATP5ME/subunit e, ATP5MF/subunit f, ATP5MG/subunit g, ATP5MK/subunit k, ATP5MJ/subunit j, ATP5F1C/subunit gamma, ATP5F1D/subunit delta, ATP5F1E/subunit epsilon, ATP5PF/subunit F6, ATP5PB/subunit b, ATP5PD/subunit d, ATP5PO/subunit OSCP. ATP synthase complex consists of a soluble F(1) head domain (subunits alpha(3) and beta(3)) - the catalytic core - and a membrane F(0) domain - the membrane proton channel (subunits c, a, 8, e, f, g, k and j). These two domains are linked by a central stalk (subunits gamma, delta, and epsilon) rotating inside the F1 region and a stationary peripheral stalk (subunits F6, b, d, and OSCP). Interacts with PRICKLE3.

Its subcellular location is the mitochondrion membrane. In terms of biological role, subunit 8, of the mitochondrial membrane ATP synthase complex (F(1)F(0) ATP synthase or Complex V) that produces ATP from ADP in the presence of a proton gradient across the membrane which is generated by electron transport complexes of the respiratory chain. ATP synthase complex consist of a soluble F(1) head domain - the catalytic core - and a membrane F(1) domain - the membrane proton channel. These two domains are linked by a central stalk rotating inside the F(1) region and a stationary peripheral stalk. During catalysis, ATP synthesis in the catalytic domain of F(1) is coupled via a rotary mechanism of the central stalk subunits to proton translocation. In vivo, can only synthesize ATP although its ATP hydrolase activity can be activated artificially in vitro. Part of the complex F(0) domain. This chain is ATP synthase F(0) complex subunit 8, found in Mus musculus (Mouse).